Reading from the N-terminus, the 188-residue chain is MVRPKLAFYILPLLLAFLGSALGWPGSQSCSVQEVLRHYQAVIFQDLQTAMQWAGLGVQHTQPGSRHHRFIQKNLTGAGGGQGQPGTSCDAQKESSILLSIESLGQTLLGSVAGVPHNALEKAAWTVAVRTEAVMRRHCGTSYRIQQPRKHAVQLRNSRRRLLLRALYAVATCWEKLFALSAMATGEF.

The N-terminal stretch at 1 to 23 (MVRPKLAFYILPLLLAFLGSALG) is a signal peptide. A glycan (N-linked (GlcNAc...) asparagine) is linked at Asn-74.

This is an uncharacterized protein from Mus musculus (Mouse).